The sequence spans 148 residues: Ribonuclease pancreatic (148 aa).

An N-terminal signal peptide occupies residues 1-25 (MGLEKSLMLFPLLVLVLGLVQPSLG). Substrate is bound by residues lysine 32 and arginine 35. Residue histidine 37 is the Proton acceptor of the active site. 4 disulfides stabilise this stretch: cysteine 50-cysteine 108, cysteine 64-cysteine 119, cysteine 82-cysteine 134, and cysteine 89-cysteine 96. Residues 65 to 69 (KPVNT), lysine 90, and arginine 109 each bind substrate. Histidine 143 acts as the Proton donor in catalysis.

It belongs to the pancreatic ribonuclease family. As to quaternary structure, monomer. Interacts with and forms tight 1:1 complexes with RNH1. Dimerization of two such complexes may occur. Interaction with RNH1 inhibits this protein. In terms of tissue distribution, pancreas.

The protein localises to the secreted. It carries out the reaction an [RNA] containing cytidine + H2O = an [RNA]-3'-cytidine-3'-phosphate + a 5'-hydroxy-ribonucleotide-3'-[RNA].. The enzyme catalyses an [RNA] containing uridine + H2O = an [RNA]-3'-uridine-3'-phosphate + a 5'-hydroxy-ribonucleotide-3'-[RNA].. Its function is as follows. Endonuclease that catalyzes the cleavage of RNA on the 3' side of pyrimidine nucleotides. Acts on single-stranded and double-stranded RNA. The protein is Ribonuclease pancreatic (RNASE1) of Gerbilliscus gambianus (Gambian gerbil).